The following is a 1488-amino-acid chain: Putative E3 ubiquitin-protein ligase LIN (1488 aa).

Disordered stretches follow at residues 297–330 (GFSMTTRRSNDGLNETTRENIASNSNHSKGEQSS), 351–414 (YDAS…PLRR), and 432–500 (IVSD…SSSS). A compositionally biased stretch (basic and acidic residues) spans 366 to 380 (EPKKNIKDEDVEPKV). A compositionally biased stretch (polar residues) spans 382 to 411 (RSNQKNQMNSPNISPMESPRRASNYSSTNP). A compositionally biased stretch (low complexity) spans 432 to 444 (IVSDHSLSSSPDT). Residues 468 to 486 (SQTPSMNQDNENSLVLNDS) are compositionally biased toward polar residues. Residues 512-587 (KPPKDFVCPI…VSWKEQNPEL (76 aa)) enclose the U-box domain. WD repeat units follow at residues 1207–1244 (SSNGEVLSLHYLNGQVLSGHADGTIKVWDARKRIPRVI), 1249–1290 (EHKK…DVYD), 1412–1451 (SLSTGLDVHRVAINSDFIFAGTKFGTIEVWLKDKFTRVAS), and 1456–1488 (GGNTKITSLASDADGMMLFVGSSDGKIQVWALD).

As to expression, expressed in roots and nodules.

It catalyses the reaction S-ubiquitinyl-[E2 ubiquitin-conjugating enzyme]-L-cysteine + [acceptor protein]-L-lysine = [E2 ubiquitin-conjugating enzyme]-L-cysteine + N(6)-ubiquitinyl-[acceptor protein]-L-lysine.. It functions in the pathway protein modification; protein ubiquitination. In terms of biological role, putative E3 ubiquitin ligase involved in the rhizobial infection process. Plays an important role in the early steps of bacterial symbiont thread formation in roots, and in growth, differentiation and maintenance of nodules. This chain is Putative E3 ubiquitin-protein ligase LIN, found in Medicago truncatula (Barrel medic).